The sequence spans 513 residues: Na(+)/H(+) antiporter NhaB (513 aa).

11 helical membrane-spanning segments follow: residues 21–41 (ITIV…SPFI), 88–108 (IIAN…IYFM), 119–139 (LLLS…SAAF), 143–163 (FLDA…FYGV), 208–228 (VGTA…LIIA), 247–267 (LPVL…GVFG), 303–323 (ALIG…VGII), 357–377 (LVVF…APII), 389–409 (LALF…VFVA), 447–467 (ATPN…APLI), and 477–497 (MALP…EYIL).

It belongs to the NhaB Na(+)/H(+) (TC 2.A.34) antiporter family.

It localises to the cell inner membrane. It catalyses the reaction 2 Na(+)(in) + 3 H(+)(out) = 2 Na(+)(out) + 3 H(+)(in). Functionally, na(+)/H(+) antiporter that extrudes sodium in exchange for external protons. The chain is Na(+)/H(+) antiporter NhaB from Pasteurella multocida (strain Pm70).